A 218-amino-acid chain; its full sequence is Large ribosomal subunit protein uL3 (218 aa).

The protein belongs to the universal ribosomal protein uL3 family. As to quaternary structure, part of the 50S ribosomal subunit. Forms a cluster with proteins L14 and L19.

Functionally, one of the primary rRNA binding proteins, it binds directly near the 3'-end of the 23S rRNA, where it nucleates assembly of the 50S subunit. This chain is Large ribosomal subunit protein uL3, found in Mycolicibacterium gilvum (strain PYR-GCK) (Mycobacterium gilvum (strain PYR-GCK)).